Here is a 101-residue protein sequence, read N- to C-terminus: Ascorbate-specific PTS system EIIB component (101 aa).

The PTS EIIB type-2 domain maps to 3–96 (VRILAVCGNG…KLLKVIKEHF (94 aa)). Cys9 functions as the Phosphocysteine intermediate in the catalytic mechanism. Cys9 carries the phosphocysteine modification.

The protein resides in the cytoplasm. It catalyses the reaction N(pros)-phospho-L-histidyl-[protein] + L-ascorbate(out) = L-ascorbate 6-phosphate(in) + L-histidyl-[protein]. Functionally, the phosphoenolpyruvate-dependent sugar phosphotransferase system (sugar PTS), a major carbohydrate active transport system, catalyzes the phosphorylation of incoming sugar substrates concomitantly with their translocation across the cell membrane. The enzyme II UlaABC PTS system is involved in ascorbate transport. In Shigella dysenteriae serotype 1 (strain Sd197), this protein is Ascorbate-specific PTS system EIIB component (ulaB).